A 419-amino-acid polypeptide reads, in one-letter code: Serine--tRNA ligase (419 aa).

Residue threonine 225–glutamate 227 participates in L-serine binding. Position 256–258 (arginine 256–glutamate 258) interacts with ATP. Glutamate 279 serves as a coordination point for L-serine. ATP is bound at residue glutamate 343–serine 346. Serine 378 contributes to the L-serine binding site.

The protein belongs to the class-II aminoacyl-tRNA synthetase family. Type-1 seryl-tRNA synthetase subfamily. Homodimer. The tRNA molecule binds across the dimer.

The protein resides in the cytoplasm. It carries out the reaction tRNA(Ser) + L-serine + ATP = L-seryl-tRNA(Ser) + AMP + diphosphate + H(+). It catalyses the reaction tRNA(Sec) + L-serine + ATP = L-seryl-tRNA(Sec) + AMP + diphosphate + H(+). Its pathway is aminoacyl-tRNA biosynthesis; selenocysteinyl-tRNA(Sec) biosynthesis; L-seryl-tRNA(Sec) from L-serine and tRNA(Sec): step 1/1. Its function is as follows. Catalyzes the attachment of serine to tRNA(Ser). Is also able to aminoacylate tRNA(Sec) with serine, to form the misacylated tRNA L-seryl-tRNA(Sec), which will be further converted into selenocysteinyl-tRNA(Sec). This chain is Serine--tRNA ligase, found in Pelagibacter ubique (strain HTCC1062).